The chain runs to 1399 residues: DNA-directed RNA polymerase subunit beta' (1399 aa).

Zn(2+) is bound by residues Cys70, Cys72, Cys85, and Cys88. Positions 460, 462, and 464 each coordinate Mg(2+). The Zn(2+) site is built by Cys814, Cys888, Cys895, and Cys898.

This sequence belongs to the RNA polymerase beta' chain family. As to quaternary structure, the RNAP catalytic core consists of 2 alpha, 1 beta, 1 beta' and 1 omega subunit. When a sigma factor is associated with the core the holoenzyme is formed, which can initiate transcription. Mg(2+) is required as a cofactor. Requires Zn(2+) as cofactor.

The enzyme catalyses RNA(n) + a ribonucleoside 5'-triphosphate = RNA(n+1) + diphosphate. Functionally, DNA-dependent RNA polymerase catalyzes the transcription of DNA into RNA using the four ribonucleoside triphosphates as substrates. This is DNA-directed RNA polymerase subunit beta' from Pseudomonas putida (strain ATCC 47054 / DSM 6125 / CFBP 8728 / NCIMB 11950 / KT2440).